The primary structure comprises 158 residues: Cyclic pyranopterin monophosphate synthase (158 aa).

Substrate is bound by residues 75–77 and 113–114; these read LCH and ME. The active site involves D128.

This sequence belongs to the MoaC family. As to quaternary structure, homohexamer; trimer of dimers.

It catalyses the reaction (8S)-3',8-cyclo-7,8-dihydroguanosine 5'-triphosphate = cyclic pyranopterin phosphate + diphosphate. Its pathway is cofactor biosynthesis; molybdopterin biosynthesis. Its function is as follows. Catalyzes the conversion of (8S)-3',8-cyclo-7,8-dihydroguanosine 5'-triphosphate to cyclic pyranopterin monophosphate (cPMP). The chain is Cyclic pyranopterin monophosphate synthase from Vibrio campbellii (strain ATCC BAA-1116).